The chain runs to 92 residues: DNA/RNA-binding protein Alba (92 aa).

Residue Lys-11 is modified to N6-acetyllysine.

The protein belongs to the histone-like Alba family. Acetylated. Acetylation at Lys-11 decreases DNA-binding affinity.

Its subcellular location is the cytoplasm. It localises to the chromosome. Functionally, binds double-stranded DNA tightly but without sequence specificity. Involved in DNA compaction. This chain is DNA/RNA-binding protein Alba, found in Pyrobaculum neutrophilum (strain DSM 2338 / JCM 9278 / NBRC 100436 / V24Sta) (Thermoproteus neutrophilus).